The primary structure comprises 405 residues: Cystathionine gamma-lyase (405 aa).

Substrate is bound by residues R62, Y114, and R119. N6-(pyridoxal phosphate)lysine is present on K212. E339 contacts substrate.

This sequence belongs to the trans-sulfuration enzymes family. Homotetramer. Interacts with CALM in a calcium-dependent manner. Requires pyridoxal 5'-phosphate as cofactor. Highly expressed in liver. Also in muscle and lower expression in most tissues except heart, pituitary gland, spleen, thymus, and vascular tissue, where it is hardly detected.

It localises to the cytoplasm. The catalysed reaction is L,L-cystathionine + H2O = 2-oxobutanoate + L-cysteine + NH4(+). The enzyme catalyses L-cysteine + H2O = hydrogen sulfide + pyruvate + NH4(+) + H(+). It carries out the reaction L-homocysteine + H2O = 2-oxobutanoate + hydrogen sulfide + NH4(+) + H(+). It catalyses the reaction L-homoserine = 2-oxobutanoate + NH4(+). The catalysed reaction is L-selenocystathionine + H2O = L-selenocysteine + 2-oxobutanoate + NH4(+). The protein operates within amino-acid biosynthesis; L-cysteine biosynthesis; L-cysteine from L-homocysteine and L-serine: step 2/2. Its activity is regulated as follows. Inhibited by propargylglycine, trifluoroalanine and aminoethoxyvinylglycine. In terms of biological role, catalyzes the last step in the trans-sulfuration pathway from L-methionine to L-cysteine in a pyridoxal-5'-phosphate (PLP)-dependent manner, which consists on cleaving the L,L-cystathionine molecule into L-cysteine, ammonia and 2-oxobutanoate. Part of the L-cysteine derived from the trans-sulfuration pathway is utilized for biosynthesis of the ubiquitous antioxidant glutathione. Besides its role in the conversion of L-cystathionine into L-cysteine, it utilizes L-cysteine and L-homocysteine as substrates (at much lower rates than L,L-cystathionine) to produce the endogenous gaseous signaling molecule hydrogen sulfide (H2S). In vitro, it converts two L-cysteine molecules into lanthionine and H2S, also two L-homocysteine molecules to homolanthionine and H2S, which can be particularly relevant under conditions of severe hyperhomocysteinemia (which is a risk factor for cardiovascular disease, diabetes, and Alzheimer's disease). Lanthionine and homolanthionine are structural homologs of L,L-cystathionine that differ by the absence or presence of an extra methylene group, respectively. Acts as a cysteine-protein sulfhydrase by mediating sulfhydration of target proteins: sulfhydration consists of converting -SH groups into -SSH on specific cysteine residues of target proteins such as GAPDH, PTPN1 and NF-kappa-B subunit RELA, thereby regulating their function. By generating the gasotransmitter H2S, it participates in a number of physiological processes such as vasodilation, bone protection, and inflammation. Plays an essential role in myogenesis by contributing to the biogenesis of H2S in skeletal muscle tissue. Can also accept homoserine as substrate. Catalyzes the elimination of selenocystathionine (which can be derived from the diet) to yield selenocysteine, ammonia and 2-oxobutanoate. This Homo sapiens (Human) protein is Cystathionine gamma-lyase (CTH).